Consider the following 476-residue polypeptide: Deoxyguanosinetriphosphate triphosphohydrolase-like protein 2 (476 aa).

Residues 1–20 (MYTDADRSREVVPEKDGHDK) are disordered. An HD domain is found at 60-233 (RLTHSLEVAQ…MDLADDIAYS (174 aa)).

It belongs to the dGTPase family. Type 2 subfamily.

In Mesorhizobium japonicum (strain LMG 29417 / CECT 9101 / MAFF 303099) (Mesorhizobium loti (strain MAFF 303099)), this protein is Deoxyguanosinetriphosphate triphosphohydrolase-like protein 2.